The chain runs to 404 residues: MSGPNYKADFPLLLRSPRVHYLDSAATTQRPAPVLERVMHYHTHLNGNAGRGSHELAVESALLIENTRKKTAQFINAAPTHDIVFTKSCTESLNIIAHCYALPRLRAGDEIVLAISNHHANIVPWQHVCRCTGATIQWLYPDAEGNLDIQEAQKKIRACTKIVSFSAVVNATGAVNPAQELTALAHQVGAVVVIDGAQAMVHGVPNVADLGCDFFVFSGHKMFSLFGVGVLCAPHTLLESMPPFLYGGGMVDFVTEQESVFKGAPHKYEGGSANTAAVVSLCAAIEYCESLESSAVRASVHALDAALLARLEELPFLETYHARARERLGIIAFNVKNVHSHDTAHILGEEGVMVRSGDHCSKPFMTHLSIQSCCRASFCIYNTMEDVEALTRALHAVGRIFQCS.

The residue at position 221 (Lys221) is an N6-(pyridoxal phosphate)lysine. The Cysteine persulfide intermediate role is filled by Cys360.

This sequence belongs to the class-V pyridoxal-phosphate-dependent aminotransferase family. Csd subfamily. Requires pyridoxal 5'-phosphate as cofactor.

It carries out the reaction (sulfur carrier)-H + L-cysteine = (sulfur carrier)-SH + L-alanine. Functionally, catalyzes the removal of elemental sulfur and selenium atoms from L-cysteine, L-cystine, L-selenocysteine, and L-selenocystine to produce L-alanine. The sequence is that of Probable cysteine desulfurase (csd) from Treponema pallidum (strain Nichols).